Reading from the N-terminus, the 201-residue chain is Small ribosomal subunit protein uS4c (201 aa).

Residues Leu-15–Tyr-44 are disordered. In terms of domain architecture, S4 RNA-binding spans Met-89–Gln-149.

Belongs to the universal ribosomal protein uS4 family. Part of the 30S ribosomal subunit. Contacts protein S5. The interaction surface between S4 and S5 is involved in control of translational fidelity.

Its subcellular location is the plastid. The protein resides in the chloroplast. Functionally, one of the primary rRNA binding proteins, it binds directly to 16S rRNA where it nucleates assembly of the body of the 30S subunit. Its function is as follows. With S5 and S12 plays an important role in translational accuracy. This chain is Small ribosomal subunit protein uS4c (rps4), found in Daucus carota (Wild carrot).